Reading from the N-terminus, the 363-residue chain is MGSANPDNKNSMTKEEEEACLSAMRLASASVLPMVLKSAIELDLLELIKKSGPGAYVSPSELAAQLPTQNPDAPVMLDRILRLLASYSVLNCTLKDLPDGGIERLYSLAPVCKFLTKNEDGVSMAALLLMNQDKVLMESWYHLKDAVLEGGIPFNKAYGMTAFEYHGKDPRFNKVFNQGMSNHSTIIMKKILEIYQGFQGLKTVVDVGGGTGATLNMIVSKYPSIKGINFDLPHVIEDAPSYPGVDHVGGDMFVSVPKGDAIFMKWICHDWSDAHCLKFLKNCHEALPENGKVILAECLLPEAPDSTLSTQNTVHVDVIMLAHNPGGKERTEKEFEALAKGAGFRGFIKVCCAYNSWIMELLK.

Substrate is bound at residue 130–136; sequence MNQDKVL. A substrate binding region spans residues 162–180; that stretch reads AFEYHGKDPRFNKVFNQGM. S-adenosyl-L-methionine contacts are provided by glycine 208, aspartate 231, aspartate 251, methionine 252, and lysine 265. Histidine 269 acts as the Proton acceptor in catalysis.

This sequence belongs to the class I-like SAM-binding methyltransferase superfamily. Cation-independent O-methyltransferase family. COMT subfamily. As to quaternary structure, homodimer.

The catalysed reaction is (E)-caffeate + S-adenosyl-L-methionine = (E)-ferulate + S-adenosyl-L-homocysteine + H(+). Its pathway is aromatic compound metabolism; phenylpropanoid biosynthesis. Catalyzes the conversion of caffeic acid to ferulic acid and of 5-hydroxyferulic acid to sinapic acid. The resulting products may subsequently be converted to the corresponding alcohols that are incorporated into lignins. The polypeptide is Caffeic acid 3-O-methyltransferase (COMT1) (Catharanthus roseus (Madagascar periwinkle)).